A 277-amino-acid chain; its full sequence is Myelin proteolipid protein (277 aa).

Residues 2–10 lie on the Cytoplasmic side of the membrane; the sequence is GLLECCARC. 3 S-palmitoyl cysteine lipidation sites follow: Cys-6, Cys-7, and Cys-10. Residues 11-36 form a helical membrane-spanning segment; sequence LIGAPFASLVATGLCFFGVALFCGCG. Residues 37 to 59 are Extracellular-facing; that stretch reads HEALTGTEQLIETYFSKNYQDYE. A helical transmembrane segment spans residues 60–88; it reads YLIDVIHAFQYVIYGTASFFFLYGALLLA. Residues 89–151 are Cytoplasmic-facing; it reads EGFYTTGAVR…LGKWLGHPDK (63 aa). Residues Cys-109, Cys-139, and Cys-141 are each lipidated (S-palmitoyl cysteine). A helical transmembrane segment spans residues 152–178; it reads FVGITYVLTIVWLLAFACSAVPVYIYF. Topologically, residues 179 to 238 are extracellular; that stretch reads NTWTTCQSIAFPTKTTASIGTLCADARMYGVLPWNAFPGKVCGSNLLSICKTSEFQMTFH. 2 cysteine pairs are disulfide-bonded: Cys-184-Cys-228 and Cys-201-Cys-220. Thr-199 carries the O-palmitoyl threonine lipid modification. The helical transmembrane segment at 239–268 threads the bilayer; it reads LFIAAFVGAAATLVSLLTFMIAATYNFAVL. Over 269–277 the chain is Cytoplasmic; sequence KLMGRGTKF.

The protein belongs to the myelin proteolipid protein family.

It localises to the cell membrane. Its function is as follows. This is the major myelin protein from the central nervous system. It plays an important role in the formation or maintenance of the multilamellar structure of myelin. The protein is Myelin proteolipid protein (PLP1) of Gallus gallus (Chicken).